Consider the following 1238-residue polypeptide: Multifunctional 2-oxoglutarate metabolism enzyme (1238 aa).

A 2-oxoglutarate dehydrogenase E1, N-terminal part region spans residues 1 to 41; it reads MANISSPFGQNEWLVEEMYRKFRDDPSSVDPSWHEFLVDYN. Residues 42 to 97 are linker; sequence PESTAEPVLTDPTSTDKQPSATPQAKPAAAADPVASRAKPATTPTVANGTAAGSAA. The segment at 44–108 is disordered; it reads STAEPVLTDP…PAKTTTTPPI (65 aa). Positions 59 to 107 are enriched in low complexity; it reads QPSATPQAKPAAAADPVASRAKPATTPTVANGTAAGSAAAPAKTTTTPP. A succinyltransferase E2 region spans residues 98-346; sequence APAKTTTTPP…LRTIHEMVLS (249 aa). Histidine 325 serves as the catalytic Proton acceptor; for succinyltransferase activity. Positions 347 to 1238 are 2-oxoglutarate dehydrogenase E1, C-terminal part; sequence DSFWDEIFRE…QQEILDTAFG (892 aa). A thiamine diphosphate-binding site is contributed by arginine 551. The 2-oxoglutarate site is built by histidine 590 and serine 615. Thiamine diphosphate is bound by residues serine 615, leucine 617, aspartate 657, alanine 658, alanine 659, and asparagine 690. Aspartate 657 lines the Mg(2+) pocket. Asparagine 690 and isoleucine 692 together coordinate Mg(2+). Positions 795-825 form a coiled coil; it reads DISLKEAEDALRDYQGQLERVFNEVRDLEKH. Histidine 1032 contributes to the 2-oxoglutarate binding site. Acetyl-CoA-binding residues include threonine 1050, arginine 1066, lysine 1101, serine 1104, glutamine 1154, arginine 1161, and arginine 1162.

Belongs to the 2-oxoacid dehydrogenase family. Kgd subfamily. Homodimer. The 2-oxoglutarate dehydrogenase (ODH) complex contains multiple copies of three enzymatic components: 2-oxoglutarate dehydrogenase (E1), dihydrolipoamide succinyltransferase (E2) and lipoamide dehydrogenase (E3). Requires Mg(2+) as cofactor. Thiamine diphosphate is required as a cofactor.

It catalyses the reaction glyoxylate + 2-oxoglutarate + H(+) = 2-hydroxy-3-oxoadipate + CO2. It carries out the reaction 2-oxoglutarate + H(+) = succinate semialdehyde + CO2. The catalysed reaction is N(6)-[(R)-lipoyl]-L-lysyl-[protein] + 2-oxoglutarate + H(+) = N(6)-[(R)-S(8)-succinyldihydrolipoyl]-L-lysyl-[protein] + CO2. The enzyme catalyses N(6)-[(R)-dihydrolipoyl]-L-lysyl-[protein] + succinyl-CoA = N(6)-[(R)-S(8)-succinyldihydrolipoyl]-L-lysyl-[protein] + CoA. It functions in the pathway carbohydrate metabolism; tricarboxylic acid cycle; succinate from 2-oxoglutarate (transferase route): step 1/2. It participates in carbohydrate metabolism; tricarboxylic acid cycle; succinyl-CoA from 2-oxoglutarate (dehydrogenase route): step 1/1. With respect to regulation, alpha-ketoglutarate dehydrogenase and decarboxylase activities are inhibited by unphosphorylated GarA, and allosterically activated by acetyl-CoA, the main substrate of the TCA cycle. Shows three enzymatic activities that share a first common step, the attack of thiamine-PP on 2-oxoglutarate (alpha-ketoglutarate, KG), leading to the formation of an enamine-thiamine-PP intermediate upon decarboxylation. Thus, displays KGD activity, catalyzing the decarboxylation from five-carbon 2-oxoglutarate to four-carbon succinate semialdehyde (SSA). Also catalyzes C-C bond formation between the activated aldehyde formed after decarboxylation of alpha-ketoglutarate and the carbonyl of glyoxylate (GLX), to yield 2-hydroxy-3-oxoadipate (HOA), which spontaneously decarboxylates to form 5-hydroxylevulinate (HLA). And is also a component of the 2-oxoglutarate dehydrogenase (ODH) complex, that catalyzes the overall conversion of 2-oxoglutarate to succinyl-CoA and CO(2). The KG decarboxylase and KG dehydrogenase reactions provide two alternative, tightly regulated, pathways connecting the oxidative and reductive branches of the TCA cycle. The protein is Multifunctional 2-oxoglutarate metabolism enzyme (kgd) of Mycobacterium leprae (strain TN).